We begin with the raw amino-acid sequence, 106 residues long: Iron-sulfur cluster assembly protein CyaY (106 aa).

This sequence belongs to the frataxin family.

Involved in iron-sulfur (Fe-S) cluster assembly. May act as a regulator of Fe-S biogenesis. In Salmonella arizonae (strain ATCC BAA-731 / CDC346-86 / RSK2980), this protein is Iron-sulfur cluster assembly protein CyaY.